A 479-amino-acid chain; its full sequence is Glutamyl-tRNA(Gln) amidotransferase subunit A (479 aa).

Residues Lys-71 and Ser-146 each act as charge relay system in the active site. The active-site Acyl-ester intermediate is the Ser-170.

Belongs to the amidase family. GatA subfamily. Heterotrimer of A, B and C subunits.

The catalysed reaction is L-glutamyl-tRNA(Gln) + L-glutamine + ATP + H2O = L-glutaminyl-tRNA(Gln) + L-glutamate + ADP + phosphate + H(+). In terms of biological role, allows the formation of correctly charged Gln-tRNA(Gln) through the transamidation of misacylated Glu-tRNA(Gln) in organisms which lack glutaminyl-tRNA synthetase. The reaction takes place in the presence of glutamine and ATP through an activated gamma-phospho-Glu-tRNA(Gln). The sequence is that of Glutamyl-tRNA(Gln) amidotransferase subunit A from Lactobacillus acidophilus (strain ATCC 700396 / NCK56 / N2 / NCFM).